We begin with the raw amino-acid sequence, 409 residues long: Elongation factor Tu, chloroplastic (409 aa).

In terms of domain architecture, tr-type G spans 10-214 (KPHVNIGTIG…AVDTYIPTPE (205 aa)). Residues 19–26 (GHVDHGKT) form a G1 region. GTP is bound at residue 19-26 (GHVDHGKT). Position 26 (threonine 26) interacts with Mg(2+). The interval 60–64 (GITIN) is G2. The G3 stretch occupies residues 81–84 (DCPG). Residues 81–85 (DCPGH) and 136–139 (NKED) each bind GTP. Residues 136-139 (NKED) are G4. The segment at 174–176 (SAL) is G5.

This sequence belongs to the TRAFAC class translation factor GTPase superfamily. Classic translation factor GTPase family. EF-Tu/EF-1A subfamily.

The protein resides in the plastid. It localises to the chloroplast. It carries out the reaction GTP + H2O = GDP + phosphate + H(+). Its function is as follows. GTP hydrolase that promotes the GTP-dependent binding of aminoacyl-tRNA to the A-site of ribosomes during protein biosynthesis. The polypeptide is Elongation factor Tu, chloroplastic (tufA) (Porphyra purpurea (Red seaweed)).